The sequence spans 247 residues: Putative ankyrin repeat protein RBE_1110 (247 aa).

ANK repeat units lie at residues 105-135 (QNKD…CIDY) and 139-171 (EGHN…KLIT).

The sequence is that of Putative ankyrin repeat protein RBE_1110 from Rickettsia bellii (strain RML369-C).